A 122-amino-acid polypeptide reads, in one-letter code: Large ribosomal subunit protein uL14 (122 aa).

The protein belongs to the universal ribosomal protein uL14 family. Part of the 50S ribosomal subunit. Forms a cluster with proteins L3 and L19. In the 70S ribosome, L14 and L19 interact and together make contacts with the 16S rRNA in bridges B5 and B8.

Functionally, binds to 23S rRNA. Forms part of two intersubunit bridges in the 70S ribosome. The protein is Large ribosomal subunit protein uL14 of Rhodococcus erythropolis (strain PR4 / NBRC 100887).